Consider the following 828-residue polypeptide: BEN domain-containing protein 3 (828 aa).

Residue lysine 20 forms a Glycyl lysine isopeptide (Lys-Gly) (interchain with G-Cter in SUMO); alternate linkage. Lysine 20 participates in a covalent cross-link: Glycyl lysine isopeptide (Lys-Gly) (interchain with G-Cter in SUMO1); alternate. Lysine 20 participates in a covalent cross-link: Glycyl lysine isopeptide (Lys-Gly) (interchain with G-Cter in SUMO2); alternate. Residues lysine 41, lysine 56, lysine 58, lysine 73, lysine 128, lysine 129, lysine 137, lysine 142, and lysine 158 each participate in a glycyl lysine isopeptide (Lys-Gly) (interchain with G-Cter in SUMO2) cross-link. The Nuclear localization signal signature appears at 56–58; that stretch reads KRK. The residue at position 164 (serine 164) is a Phosphoserine. Residues 164–184 form a disordered region; it reads SPSSLRLLNEPQKRDCGSTGA. Lysine 176 participates in a covalent cross-link: Glycyl lysine isopeptide (Lys-Gly) (interchain with G-Cter in SUMO2). The 102-residue stretch at 242 to 343 folds into the BEN 1 domain; sequence PPPEYQLTAA…DFFSRFWAQR (102 aa). Phosphoserine is present on serine 379. A BEN 2 domain is found at 387–487; the sequence is ASDHVVDTQD…DELEGLGLDA (101 aa). Lysine 427 is covalently cross-linked (Glycyl lysine isopeptide (Lys-Gly) (interchain with G-Cter in SUMO2)). The interval 483 to 504 is disordered; sequence LGLDAGSEGDPPRDDCYDSSSL. Serine 489 carries the post-translational modification Phosphoserine. A Glycyl lysine isopeptide (Lys-Gly) (interchain with G-Cter in SUMO); alternate cross-link involves residue lysine 512. Lysine 512 is covalently cross-linked (Glycyl lysine isopeptide (Lys-Gly) (interchain with G-Cter in SUMO2); alternate). Lysine 528 participates in a covalent cross-link: Glycyl lysine isopeptide (Lys-Gly) (interchain with G-Cter in SUMO2). The region spanning 548 to 650 is the BEN 3 domain; sequence VPGADCLLSK…ERCRRRDTEQ (103 aa). Lysine 700 is covalently cross-linked (Glycyl lysine isopeptide (Lys-Gly) (interchain with G-Cter in SUMO2)). The 102-residue stretch at 715–816 folds into the BEN 4 domain; the sequence is VPSPYLLSDK…ERCRRPNRKK (102 aa).

Homooligomer, probably a homooctamer. Interacts with HDAC2 and HDAC3, but not HDAC1. Interacts with SALL4. Interacts with SMARCA5/SNF2H, BAZ2A/TIP5 and USP21. Interacts with the nucleosome remodeling and histone deacetylase (NuRD) repressor complex. Interacts (via BEN domains 1 and 3) with ERCC6L (via N-terminal TPR repeat); the interaction is direct. In terms of processing, sumoylated at Lys-20 by SUMO1 and at Lys-512 by SUMO1, SUMO2 and SUMO3. Sumoylation probably occurs sequentially, with that of Lys-20 preceding that of Lys-512. It does not alter association with heterochromatin, but is required for the repression of transcription. Expressed at least in heart, kidney, liver, ovary and spleen, with highest levels in spleen and lowest in heart. Expressed on the surface of T-cells.

It is found in the nucleus. The protein localises to the nucleolus. Its function is as follows. Transcriptional repressor which associates with the NoRC (nucleolar remodeling complex) complex and plays a key role in repressing rDNA transcription. The sumoylated form modulates the stability of the NoRC complex component BAZ2A/TIP5 by controlling its USP21-mediated deubiquitination. Binds to unmethylated major satellite DNA and is involved in the recruitment of the Polycomb repressive complex 2 (PRC2) to major satellites. Stimulates the ERCC6L translocase and ATPase activities. The polypeptide is BEN domain-containing protein 3 (BEND3) (Homo sapiens (Human)).